Reading from the N-terminus, the 32-residue chain is Peptide tarsal-less AA (32 aa).

Positions 1–32 (MLDPTGTYRRPRDTQDSRQKRRQDCLDPTGQY) are disordered. Repeat 1 spans residues 2–8 (LDPTGTY). A 2 X 7 AA repeats of L-D-P-T-G-[TQ]-Y region spans residues 2-32 (LDPTGTYRRPRDTQDSRQKRRQDCLDPTGQY). A compositionally biased stretch (basic and acidic residues) spans 10–25 (RPRDTQDSRQKRRQDC). Residues 26–32 (LDPTGQY) form repeat 2.

Its subcellular location is the cytoplasm. It is found in the nucleus. In terms of biological role, one of four peptides (tal-1A, tal-2A, tal-3A and tal-AA) produced from a polycistronic gene that function redundantly in several developmental processes. Required in early stages of leg development for the intercalation of the tarsal segments during the mid-third instar stage and later for tarsal joint formation. Promotes the post-translational modification of ovo isoform B (svb) into its active form which in turn initiates trichome development and promotes tarsal joint development. This is likely due to recruitment of the E3 ubiquitin-protein ligase Ubr3 to svb for ubiquitination of its N-terminus, converting svb into a transcriptional activator. Also enhances interaction of Ubr3 with Diap1. Required for correct wing and leg formation through its regulation of several genes including those in the Notch signaling pathway. Essential for denticle formation and may have a role in the developmental timing of trichome differentiation. Essential for the development of taenidial folds in the trachea. This is Peptide tarsal-less AA from Drosophila melanogaster (Fruit fly).